The primary structure comprises 293 residues: MDVIIDKNSGYCFGVEFAIQMAEDEMATGEPLFCLGDIVHNSMEVERLAKKGLKIIDREELKKLSDCKVLIRAHGEPPETYQLALENNIELVDASCPVVLKLQNRVKASFDAIDSKDGQIVIYGQEGHAEVIGIAGQTGDKAIVITTEKDLDKIDFEKPVTLYSQTTKSTQGFYKMKDLIEARVAEAGKNVDENFEYNDSICRQVSNREPQLRKFSKEFDVVIFVSGKKSSNGKALYGVCKQENERSYFVENETEIEPSWIRATDNVGICGATSTPMWLMEKVQNYIQAHSWN.

C12 is a [4Fe-4S] cluster binding site. (2E)-4-hydroxy-3-methylbut-2-enyl diphosphate-binding residues include H40 and H74. Dimethylallyl diphosphate is bound by residues H40 and H74. Residues H40 and H74 each contribute to the isopentenyl diphosphate site. C96 is a binding site for [4Fe-4S] cluster. H128 serves as a coordination point for (2E)-4-hydroxy-3-methylbut-2-enyl diphosphate. Residue H128 participates in dimethylallyl diphosphate binding. H128 is a binding site for isopentenyl diphosphate. E130 serves as the catalytic Proton donor. Position 166 (T166) interacts with (2E)-4-hydroxy-3-methylbut-2-enyl diphosphate. C202 contributes to the [4Fe-4S] cluster binding site. S230, S231, N232, and S274 together coordinate (2E)-4-hydroxy-3-methylbut-2-enyl diphosphate. Dimethylallyl diphosphate-binding residues include S230, S231, N232, and S274. Isopentenyl diphosphate contacts are provided by S230, S231, N232, and S274.

Belongs to the IspH family. The cofactor is [4Fe-4S] cluster.

It catalyses the reaction isopentenyl diphosphate + 2 oxidized [2Fe-2S]-[ferredoxin] + H2O = (2E)-4-hydroxy-3-methylbut-2-enyl diphosphate + 2 reduced [2Fe-2S]-[ferredoxin] + 2 H(+). The enzyme catalyses dimethylallyl diphosphate + 2 oxidized [2Fe-2S]-[ferredoxin] + H2O = (2E)-4-hydroxy-3-methylbut-2-enyl diphosphate + 2 reduced [2Fe-2S]-[ferredoxin] + 2 H(+). It participates in isoprenoid biosynthesis; dimethylallyl diphosphate biosynthesis; dimethylallyl diphosphate from (2E)-4-hydroxy-3-methylbutenyl diphosphate: step 1/1. Its pathway is isoprenoid biosynthesis; isopentenyl diphosphate biosynthesis via DXP pathway; isopentenyl diphosphate from 1-deoxy-D-xylulose 5-phosphate: step 6/6. In terms of biological role, catalyzes the conversion of 1-hydroxy-2-methyl-2-(E)-butenyl 4-diphosphate (HMBPP) into a mixture of isopentenyl diphosphate (IPP) and dimethylallyl diphosphate (DMAPP). Acts in the terminal step of the DOXP/MEP pathway for isoprenoid precursor biosynthesis. The sequence is that of 4-hydroxy-3-methylbut-2-enyl diphosphate reductase from Cytophaga hutchinsonii (strain ATCC 33406 / DSM 1761 / CIP 103989 / NBRC 15051 / NCIMB 9469 / D465).